The sequence spans 299 residues: Large ribosomal subunit protein uL18 (299 aa).

Belongs to the universal ribosomal protein uL18 family. As to quaternary structure, component of the large ribosomal subunit (LSU).

Its subcellular location is the cytoplasm. The protein localises to the nucleus. Component of the ribosome, a large ribonucleoprotein complex responsible for the synthesis of proteins in the cell. The small ribosomal subunit (SSU) binds messenger RNAs (mRNAs) and translates the encoded message by selecting cognate aminoacyl-transfer RNA (tRNA) molecules. The large subunit (LSU) contains the ribosomal catalytic site termed the peptidyl transferase center (PTC), which catalyzes the formation of peptide bonds, thereby polymerizing the amino acids delivered by tRNAs into a polypeptide chain. The nascent polypeptides leave the ribosome through a tunnel in the LSU and interact with protein factors that function in enzymatic processing, targeting, and the membrane insertion of nascent chains at the exit of the ribosomal tunnel. The sequence is that of Large ribosomal subunit protein uL18 (RpL5) from Bombyx mori (Silk moth).